We begin with the raw amino-acid sequence, 439 residues long: Proline--tRNA ligase (439 aa).

The protein belongs to the class-II aminoacyl-tRNA synthetase family. ProS type 2 subfamily. In terms of assembly, homodimer.

It is found in the cytoplasm. The enzyme catalyses tRNA(Pro) + L-proline + ATP = L-prolyl-tRNA(Pro) + AMP + diphosphate. Catalyzes the attachment of proline to tRNA(Pro) in a two-step reaction: proline is first activated by ATP to form Pro-AMP and then transferred to the acceptor end of tRNA(Pro). In Rhodopseudomonas palustris (strain BisB5), this protein is Proline--tRNA ligase.